A 127-amino-acid polypeptide reads, in one-letter code: DNA-directed RNA polymerase subunit omega (127 aa).

It belongs to the RNA polymerase subunit omega family. The RNAP catalytic core consists of 2 alpha, 1 beta, 1 beta' and 1 omega subunit. When a sigma factor is associated with the core the holoenzyme is formed, which can initiate transcription.

The enzyme catalyses RNA(n) + a ribonucleoside 5'-triphosphate = RNA(n+1) + diphosphate. Its function is as follows. Promotes RNA polymerase assembly. Latches the N- and C-terminal regions of the beta' subunit thereby facilitating its interaction with the beta and alpha subunits. The polypeptide is DNA-directed RNA polymerase subunit omega (Rickettsia typhi (strain ATCC VR-144 / Wilmington)).